Consider the following 171-residue polypeptide: Translationally-controlled tumor protein homolog (171 aa).

The TCTP domain maps to 1–171 (MKIWKDVFTG…FKHGLEEEKF (171 aa)).

It belongs to the TCTP family.

It is found in the cytoplasm. Involved in calcium binding and microtubule stabilization. The chain is Translationally-controlled tumor protein homolog from Anopheles gambiae (African malaria mosquito).